Consider the following 87-residue polypeptide: Putative protein KleG (87 aa).

2 disordered regions span residues 1 to 23 and 61 to 87; these read MRHSSLTPRGKSWPCSAPPWPSS and IPTTGDRRGRRPQRHRPSTRREQIFSR. Basic residues predominate over residues 68–78; that stretch reads RGRRPQRHRPS.

The polypeptide is Putative protein KleG (kleG) (Escherichia coli).